The chain runs to 429 residues: Tol-Pal system protein TolB (429 aa).

A signal peptide spans 1–22 (MTRRLFILITIMLCLIPALLHS). Disordered stretches follow at residues 362 to 383 (PDGTNDTRLTSEGSNEHPRWSP) and 407 to 429 (GSGQTRVSGGKGRDSHPTWSPRW). Residues 363 to 374 (DGTNDTRLTSEG) are compositionally biased toward polar residues.

Belongs to the TolB family. As to quaternary structure, the Tol-Pal system is composed of five core proteins: the inner membrane proteins TolA, TolQ and TolR, the periplasmic protein TolB and the outer membrane protein Pal. They form a network linking the inner and outer membranes and the peptidoglycan layer.

The protein resides in the periplasm. Functionally, part of the Tol-Pal system, which plays a role in outer membrane invagination during cell division and is important for maintaining outer membrane integrity. This chain is Tol-Pal system protein TolB, found in Geobacter metallireducens (strain ATCC 53774 / DSM 7210 / GS-15).